The following is a 284-amino-acid chain: Probable palmitoyltransferase ZDHHC24 (284 aa).

Topologically, residues 1–18 (MGESWAARGAEGAPARMP) are cytoplasmic. The helical transmembrane segment at 19 to 39 (LVLTALWAAVVVLELAYVMVL) threads the bilayer. Over 40-52 (GPGPPPLGPLARA) the chain is Extracellular. Residues 53–73 (LQLALAAYQLLNLLGNVVLFL) form a helical membrane-spanning segment. Topologically, residues 74–137 (RSDPSIRGVM…GCCVGFHNYR (64 aa)) are cytoplasmic. Residues 94–144 (AYCYQCQSQVPPRSGHCSACRVCILRRDHHCRLLGCCVGFHNYRPFLCLLL) form the DHHC domain. The active-site S-palmitoyl cysteine intermediate is the Cys124. A helical membrane pass occupies residues 138–158 (PFLCLLLHSAGVLLHISVLLG). Topologically, residues 159-166 (PALSALLQ) are extracellular. The chain crosses the membrane as a helical span at residues 167 to 187 (AHSALYTVALLLLPWLMLLTG). Over 188 to 195 (KVSLAQFA) the chain is Cytoplasmic. The helical transmembrane segment at 196–216 (LAFVVDTCVAGALLCGAGLLF) threads the bilayer. Residues 217-284 (HGMLLLRGQT…TPGDVGLVTS (68 aa)) lie on the Extracellular side of the membrane.

This sequence belongs to the DHHC palmitoyltransferase family.

It is found in the membrane. It carries out the reaction L-cysteinyl-[protein] + hexadecanoyl-CoA = S-hexadecanoyl-L-cysteinyl-[protein] + CoA. Probable palmitoyltransferase that could catalyze the addition of palmitate onto various protein substrates. This is Probable palmitoyltransferase ZDHHC24 from Mus musculus (Mouse).